Consider the following 456-residue polypeptide: ATP-dependent protease ATPase subunit HslU (456 aa).

Residues Val18, 60-65, Asp269, Glu334, and Arg406 each bind ATP; that span reads GVGKTE.

It belongs to the ClpX chaperone family. HslU subfamily. A double ring-shaped homohexamer of HslV is capped on each side by a ring-shaped HslU homohexamer. The assembly of the HslU/HslV complex is dependent on binding of ATP.

It localises to the cytoplasm. Its function is as follows. ATPase subunit of a proteasome-like degradation complex; this subunit has chaperone activity. The binding of ATP and its subsequent hydrolysis by HslU are essential for unfolding of protein substrates subsequently hydrolyzed by HslV. HslU recognizes the N-terminal part of its protein substrates and unfolds these before they are guided to HslV for hydrolysis. The polypeptide is ATP-dependent protease ATPase subunit HslU (Desulfosudis oleivorans (strain DSM 6200 / JCM 39069 / Hxd3) (Desulfococcus oleovorans)).